The primary structure comprises 188 residues: Peroxiredoxin y4vD (188 aa).

The 151-residue stretch at 2–152 (PVKKRVPFVA…VEQWFEEEGF (151 aa)) folds into the Thioredoxin domain. Catalysis depends on Cys56, which acts as the Cysteine sulfenic acid (-SOH) intermediate (for peroxiredoxin activity).

The protein belongs to the peroxiredoxin family. Prx5 subfamily. In terms of assembly, monomer.

It catalyses the reaction a hydroperoxide + 2 glutathione = an alcohol + glutathione disulfide + H2O. In terms of biological role, thiol-specific peroxidase that catalyzes the reduction of hydrogen peroxide and organic hydroperoxides to water and alcohols, respectively. Plays a role in cell protection against oxidative stress by detoxifying peroxides. The protein is Peroxiredoxin y4vD of Sinorhizobium fredii (strain NBRC 101917 / NGR234).